The primary structure comprises 224 residues: MQQPYEYRYPQGTGPSAPPPPPKAGVIVDPKYCSLHPVDLAIVRKVLKITDGNFVITNAEGNLLFKVKDPFFSLHEKRILMDGFGTKVLTLKGKIMTMHDRWLVFRGGSTEEVDLLYTVKRSNMVQITTKLDVFLADNIEQKKCDYRLEGVWLETSCFVYAGDSDIILAQMREKKTMQSVLFGKDNFCLTVNPNVDYAFIASLIVILVEIQISLRKLTKQLLLE.

The disordered stretch occupies residues 1–23; sequence MQQPYEYRYPQGTGPSAPPPPPK.

The protein belongs to the LOR family.

Might be related to the phospholipid scramblase and tubby-like superfamily of membrane tethered transcription factors. In Arabidopsis thaliana (Mouse-ear cress), this protein is Protein LURP-one-related 1.